The sequence spans 640 residues: Threonine--tRNA ligase (640 aa).

A TGS domain is found at 1 to 61; the sequence is MPIITLPDGS…ERDATLQIIT (61 aa). Residues 242–533 form a catalytic region; it reads DHRRIGKQLD…LIEHYAGAFP (292 aa). C333, H384, and H510 together coordinate Zn(2+).

This sequence belongs to the class-II aminoacyl-tRNA synthetase family. Homodimer. Requires Zn(2+) as cofactor.

The protein localises to the cytoplasm. It catalyses the reaction tRNA(Thr) + L-threonine + ATP = L-threonyl-tRNA(Thr) + AMP + diphosphate + H(+). Functionally, catalyzes the attachment of threonine to tRNA(Thr) in a two-step reaction: L-threonine is first activated by ATP to form Thr-AMP and then transferred to the acceptor end of tRNA(Thr). Also edits incorrectly charged L-seryl-tRNA(Thr). The chain is Threonine--tRNA ligase from Pseudomonas paraeruginosa (strain DSM 24068 / PA7) (Pseudomonas aeruginosa (strain PA7)).